We begin with the raw amino-acid sequence, 895 residues long: Stonin-2 (895 aa).

Disordered stretches follow at residues 10–101 (THQS…AISN), 144–204 (ASES…METI), and 236–279 (NEVG…PKST). Residues 64–73 (SHSEQDDSSE) show a composition bias toward basic and acidic residues. Polar residues-rich tracts occupy residues 145–169 (SESSWTTHSEDTSSPSVAPSYTDLQ) and 179–193 (GRASGTDSTDNSSSL). Phosphoserine occurs at positions 278, 284, and 299. 2 disordered regions span residues 291-326 (ISSLNRPPSVTEAPPWRATNPFLNESLQDIQPSPIN) and 386-424 (QIDDPDPVGNAALPDDDPTASVEPDAPSPTSALSQPRDG). 2 short sequence motifs (NPF) span residues 310-312 (NPF) and 326-328 (NPF). Residues 311–323 (PFLNESLQDIQPS) are compositionally biased toward polar residues. Residues 424 to 557 (GWPMMLRIPE…DLPVQSMDLS (134 aa)) form the SHD domain. Positions 565 to 872 (EEEITVDIRD…AHYSYKVEIE (308 aa)) constitute an MHD domain. Serine 759 carries the post-translational modification Phosphoserine.

Belongs to the Stoned B family. In terms of assembly, interacts with the second C2 domain of synaptotagmins SYT1 and SYT2. Interacts with EPS15, EPS15R and ITSN1. Interacts indirectly with the AP-2 adapter complex. Interacts with TOR1A and COPS4; the interaction controls STON2 protein stability. Phosphorylated in vitro by PKD. Post-translationally, neddylated and ubiquitinated; leading to its degradation and inhibited by TOR1A and COPS4.

The protein resides in the synapse. Its subcellular location is the synaptosome. It localises to the cytoplasm. It is found in the membrane. Its function is as follows. Adapter protein involved in endocytic machinery. Involved in the synaptic vesicle recycling. May facilitate clathrin-coated vesicle uncoating. This is Stonin-2 (Ston2) from Rattus norvegicus (Rat).